We begin with the raw amino-acid sequence, 352 residues long: Zona pellucida-binding protein 2 (352 aa).

Residues 1–28 (MAGGGGRPCSPQRALLGMVAIMAVVAEA) form the signal peptide. Residues Asn110 and Asn309 are each glycosylated (N-linked (GlcNAc...) asparagine).

The protein belongs to the zona pellucida-binding protein Sp38 family.

Its subcellular location is the secreted. It is found in the cytoplasmic vesicle. It localises to the secretory vesicle. The protein resides in the acrosome. May be implicated in the gamete interaction during fertilization. The sequence is that of Zona pellucida-binding protein 2 (ZPBP2) from Gallus gallus (Chicken).